The chain runs to 696 residues: MTTKAQSYLTHFRNIGIAAHIDAGKTTTTERILYYTGRTHNIGEVHDGAATMDWMEQERERGITITAAATTAKWKRSGTNEEYTINIIDTPGHVDFTIEVERSMRVLDGAVAVFDSSQGVEPQSETVWRQADRYGVPRIAFANKMDKTGASFELVVNDIRERLGAIPAPIQYPMGQENEFKGIIDLVRQRAYTYTNDLGTEIQEHDVPAEYADKVAEMRAQLIEAAAEVDEDLMMMYLEGEEPSVEQLVAALRKGTIDKKIFPVLCGSSLKNKGVQLLLDAVVDYLPSPLDIPAIKGTTENGEVIEYPADPEGKLAALAFKIMADPYVGRLTFVRIYSGTLQAGSYVYNASKDKRERVGRLLKMHANSREEVTELKAGELGAVIGLKDAGTGNTLIGDGDTRVLLESIDVPEPVIKLAIEPKTKADQEKMGIGLQKLAEEDPTFKVETDQESGQTTISGMGELHLEILVDRLKREYKVDANVGAPQVAYRETITKPVDVEGKFVRQSGGRGQFGHVKIKAEPLEPGAGFVFENAVVGGTVPKEYIGPAQKGIEEAMQSGPMLGFPVVDMKVTLYDGSYHEVDSSEMAFKIAGSMALKEAVQKGAPALLEPIMRVEVTVPEEYMGDIIGDLNSRRGQIQGMEARGNAQIVKAFVPLSEMFGYATDMRSMTQGRASYSMFFDHYSQVPNNLAQQLMKK.

One can recognise a tr-type G domain in the interval 10 to 290; sequence THFRNIGIAA…AVVDYLPSPL (281 aa). GTP-binding positions include 19–26, 89–93, and 143–146; these read AHIDAGKT, DTPGH, and NKMD.

Belongs to the TRAFAC class translation factor GTPase superfamily. Classic translation factor GTPase family. EF-G/EF-2 subfamily.

Its subcellular location is the cytoplasm. In terms of biological role, catalyzes the GTP-dependent ribosomal translocation step during translation elongation. During this step, the ribosome changes from the pre-translocational (PRE) to the post-translocational (POST) state as the newly formed A-site-bound peptidyl-tRNA and P-site-bound deacylated tRNA move to the P and E sites, respectively. Catalyzes the coordinated movement of the two tRNA molecules, the mRNA and conformational changes in the ribosome. This is Elongation factor G from Deinococcus geothermalis (strain DSM 11300 / CIP 105573 / AG-3a).